The sequence spans 718 residues: Protein Smaug homolog 1 (718 aa).

Phosphoserine is present on serine 168. The tract at residues 278-310 is disordered; that stretch reads ARGPQCLPSDHAPLSPQSSVASSGSGGSEHLED. The SAM domain occupies 323 to 396; it reads SGMKDVPAWL…LKSLERDIIE (74 aa). Disordered regions lie at residues 417-474 and 572-601; these read AYGS…LQPH and NRGFGQSDSLPTAGSMGSGMGRRNPRQYQI. Serine 420 carries the phosphoserine modification. Position 424 is a phosphothreonine (threonine 424). The span at 453-466 shows a compositional bias: low complexity; sequence GATATGATATPSAG. Arginine 573 is modified (omega-N-methylarginine). At serine 580 the chain carries Phosphoserine.

It belongs to the SMAUG family.

It localises to the cytoplasm. The protein localises to the cell projection. It is found in the dendrite. The protein resides in the synapse. Its subcellular location is the synaptosome. Functionally, acts as a translational repressor of SRE-containing messengers. The chain is Protein Smaug homolog 1 (SAMD4A) from Macaca fascicularis (Crab-eating macaque).